Consider the following 246-residue polypeptide: Putative carbonic anhydrase 3 (246 aa).

In terms of domain architecture, Alpha-carbonic anhydrase spans 3-244; that stretch reads GHWSYCDDDE…LNDRKIVHIV (242 aa). Catalysis depends on histidine 61, which acts as the Proton acceptor. Zn(2+) is bound by residues histidine 91, histidine 93, and histidine 116. Residue 187 to 188 participates in substrate binding; that stretch reads TT.

It belongs to the alpha-carbonic anhydrase family. It depends on Zn(2+) as a cofactor.

It carries out the reaction hydrogencarbonate + H(+) = CO2 + H2O. Its function is as follows. Reversible hydration of carbon dioxide. This chain is Putative carbonic anhydrase 3 (cah-3), found in Caenorhabditis elegans.